A 167-amino-acid polypeptide reads, in one-letter code: Small ribosomal subunit protein uS5 (167 aa).

The S5 DRBM domain occupies 12–75; sequence LEDNVVAINR…EAARKNLIEV (64 aa).

The protein belongs to the universal ribosomal protein uS5 family. In terms of assembly, part of the 30S ribosomal subunit. Contacts proteins S4 and S8.

Functionally, with S4 and S12 plays an important role in translational accuracy. Located at the back of the 30S subunit body where it stabilizes the conformation of the head with respect to the body. The chain is Small ribosomal subunit protein uS5 from Levilactobacillus brevis (strain ATCC 367 / BCRC 12310 / CIP 105137 / JCM 1170 / LMG 11437 / NCIMB 947 / NCTC 947) (Lactobacillus brevis).